Here is a 441-residue protein sequence, read N- to C-terminus: Cortexillin-2 (441 aa).

The actin-binding stretch occupies residues 1–229; that stretch reads MDLNKEWEKV…VLYTSLFFHA (229 aa). Calponin-homology (CH) domains are found at residues 9–117 and 126–231; these read KVQE…RKYR and KSSE…HAFR. Coiled coils occupy residues 229–362 and 406–430; these read AFRA…RLGL and SFEEQAKKLASKLESENILIEKYLN.

Belongs to the cortexillin family. In terms of assembly, homodimer; parallel.

It is found in the cytoplasm. The protein localises to the cytoskeleton. In terms of biological role, actin-bundling protein. When linked to F-actin the actin filaments form preferentially anti-parallel bundles that associate into meshworks. Plays a major role in cytokinesis. Negatively regulates cortical localization of rapgap1. The sequence is that of Cortexillin-2 (ctxB) from Dictyostelium discoideum (Social amoeba).